The chain runs to 273 residues: MAIVKCKPTSAGRRFVVKVVNQELHKGAPYAPLLEKKSKSGGRNNNGRITTRHIGGGHKQHYRLVDFRRNKDGIPATVERIEYDPNRTAHIALLKYADGERRYIIAPKGVVAGDQLISGVNAPIKAGNTLPLRNIPVGSTIHGVELKPGKGAQIARSAGASAQLVAREGAYVTLRLRSGEMRKVLADCRATLGEVSNSEHSLRSLGKAGAKRWRGVRPTVRGVAMNPVDHPHGGGEGRTSGGRHPVSPWGFPTKGAKTRSNKRTDNMIVRRRK.

2 disordered regions span residues 34-54 (LEKK…TRHI) and 223-273 (VAMN…RRRK).

Belongs to the universal ribosomal protein uL2 family. Part of the 50S ribosomal subunit. Forms a bridge to the 30S subunit in the 70S ribosome.

In terms of biological role, one of the primary rRNA binding proteins. Required for association of the 30S and 50S subunits to form the 70S ribosome, for tRNA binding and peptide bond formation. It has been suggested to have peptidyltransferase activity; this is somewhat controversial. Makes several contacts with the 16S rRNA in the 70S ribosome. The protein is Large ribosomal subunit protein uL2 of Azotobacter vinelandii (strain DJ / ATCC BAA-1303).